Reading from the N-terminus, the 250-residue chain is uncharacterized protein (250 aa).

A helical membrane pass occupies residues 2–22 (ILRIIIFVIIILVVSLLLIYF).

The protein localises to the membrane. This is an uncharacterized protein from Acanthamoeba polyphaga (Amoeba).